We begin with the raw amino-acid sequence, 151 residues long: Transcriptional regulator MraZ (151 aa).

2 SpoVT-AbrB domains span residues 5–52 (ANAI…PLPE) and 81–124 (AVDL…DEDA).

The protein belongs to the MraZ family. As to quaternary structure, forms oligomers.

It localises to the cytoplasm. Its subcellular location is the nucleoid. This is Transcriptional regulator MraZ from Pseudomonas aeruginosa (strain LESB58).